Here is a 141-residue protein sequence, read N- to C-terminus: Cystatin (141 aa).

The signal sequence occupies residues 1-26 (MVHSQLPVAASLRLLCALLLLPSATM). Residues 29 to 129 (GGLSPRSVTD…CRFQVWSRPW (101 aa)) enclose the Cystatin domain. The Secondary area of contact motif lies at 73–77 (QVVAG). 2 disulfide bridges follow: Cys91-Cys107 and Cys120-Cys140.

The protein belongs to the cystatin family. As to expression, expressed by the venom gland at an extremely low level (at protein level).

The protein localises to the secreted. Functionally, inhibits various C1 cysteine proteases including cathepsin L, papain and cathepsin B. This protein has no toxic activity and its function in the venom is unknown. It may play a role as a housekeeping or regulatory protein. The chain is Cystatin from Cryptophis nigrescens (Eastern small-eyed snake).